A 395-amino-acid polypeptide reads, in one-letter code: Neuromedin-U receptor 2 (395 aa).

Over 1 to 41 the chain is Extracellular; the sequence is MGKLENASWIHDPLMKYLNSTEEYLAHLCGPKRSDLSLPVS. N-linked (GlcNAc...) asparagine glycans are attached at residues asparagine 6 and asparagine 19. A helical transmembrane segment spans residues 42–62; sequence VAYALIFLVGVMGNLLVCMVI. Topologically, residues 63–74 are cytoplasmic; that stretch reads VRHQTLKTPTNY. The helical transmembrane segment at 75-95 threads the bilayer; sequence YLFSLAVSDLLVLLLGMPLEI. The Extracellular segment spans residues 96 to 115; the sequence is YEMWHNYPFLFGPVGCYFKT. Cysteines 111 and 196 form a disulfide. A helical membrane pass occupies residues 116–138; that stretch reads ALFETVCFASILSVTTVSVERYV. Over 139-157 the chain is Cytoplasmic; sequence AIVHPFRAKLESTRRRALR. A helical membrane pass occupies residues 158-178; the sequence is ILSLVWSFSVVFSLPNTSIHG. Topologically, residues 179 to 212 are extracellular; that stretch reads IKFQHFPNGSSVPGSATCTVTKPMWVYNLIIQAT. A glycan (N-linked (GlcNAc...) asparagine) is linked at asparagine 186. A helical membrane pass occupies residues 213 to 233; it reads SFLFYILPMTLISVLYYLMGL. Over 234-257 the chain is Cytoplasmic; that stretch reads RLKRDESLEANKVAVNIHRPSRKS. A helical transmembrane segment spans residues 258–278; it reads VTKMLFVLVLVFAICWTPFHV. Residues 279–293 lie on the Extracellular side of the membrane; that stretch reads DRLFFSFVEEWTESL. A helical membrane pass occupies residues 294-314; it reads AAVFNLIHVVSGVFFYLSSAV. Residues 315–395 are Cytoplasmic-facing; that stretch reads NPIIYNLLSR…TTAPCAGEVP (81 aa). The tract at residues 374-395 is disordered; that stretch reads FPGQSSIHNTNLTTAPCAGEVP. Polar residues predominate over residues 375-387; it reads PGQSSIHNTNLTT.

This sequence belongs to the G-protein coupled receptor 1 family. The highest level is detected in the uterus. In the central nervous system, high expression levels were found in the hypothalamus and moderate levels in both the medulla oblongata and spinal cord. Expressed in the hypothalamic paraventricular nucleus (PVN) and suprachiasmatic nuclei (SCN) of the hypothalamus. Expression is low in the gastrointestinal tract. In other peripheral tissues, moderate expression was observed in the lung and ovary.

It localises to the cell membrane. Functionally, receptor for the neuromedin-U and neuromedin-S neuropeptides. The sequence is that of Neuromedin-U receptor 2 (Nmur2) from Rattus norvegicus (Rat).